The sequence spans 1642 residues: MKCAKHPSTISMKLTSVPELPYKKGLLNSSPKPKEKHNAKSKYGKNESMVLRSPPTGESIVRFALPIPLSKTKDKISADEMVRRITTNLKMVVSNLEDTYGACYDNGEKAAEKSEAEGLSIGDDVSSFLLCCSQFTSQLEEAVKEECGALESLYKWFQQQVNQMEEISKDQSNLEELQSDGKTASLNIVQIAKLARKFEDFKSRLKTRKEVMQTKNEDKEIMAETLKHYGLMEKQIEEFITSHSALESQTETESQSGTPSVTTRMARMIKIFENQSTMLEKALNDQQTIESKYKQLETDFQMLIMEKTLLEAEIRRLREIERVKSAAKEEQTKKSGKSEKKKFKEKEKNLSPNREFKSIEELLQIQKEAELLKTEKKTLQGQLKWALEEAERNKTQLEFVLHQKMEMFKEESKTKVGQSQNKSKVKIEDSKDSLPKKSDTQLGGQRKDQISSDQSKRPKKKQLADIDPSAVEDFPPETFKSFTVMPLIEEHRESISSQPKEEMAKASEQSEAEDIEGPLEIPSESSNEDDDLLPEDESPMMEQVTDVGRYKSIYISAEPIDTMSLISRTQSEMETLEAINYDNVLNEGEEQDKKIGKDSDTGRKSKRKRSSKIRKLSTHEEESDIVHYEEATKAKVPSKKRASDPYGDEAYESRGSVSKAQTYTKKQGTHQRGRGSASDAYGDEAYESRGSISKAQTYTRKQGTHQRGRGSVQEEESDTVHYEEVTRAKVPSKKQASDPYGDEAYESQGSVSKAHTHTKKQGTHQRGRGSVHEEESDTMNYEVPRKSKISSRRKGFALPITHQVEMHSSESQGSISKSNTETKKQGTHKRGRDSDADGARTPVSQGSDSKADTERKKHRSKEESTISKDSIPVLDEVQDKTFEHQESGLRLEVQAKKLTFSSQNIHNEESATDIKVEYQNVPSSSQVQLKKQKPLGGEIFTTHFVVPAESHAQLYQTHTPETQIERGTTSGTARLTTIPVEHPKKEASPDNLFPEKKLYITRAPTQTKKQYPPWDAKAETQKKTVKEVQGISEPQTKLNPTMSGIILHLDMDRVVETDLENLEETIVPHVLRSELEIGTDAKNMPETPTSREAVRTEAKGNQDVTISIAKGMKLIGKLKDQHGLSSFASKDTISPGKSLIKSSRDNQDDSLLETKPQENTSDKYHPSKTFPTKVINMLPFSEKSLGSTSANVDVAPKPVYRASRGRSRISKALQQLLKTSEHLKPTSTKNQNADLEKHLYISVRSANKHTQKDKKHGQSNNQKLKKQGALSSTKKQKHKEQPKTETIVENNDKFDDNLMMTTSSPNIKIIKELSKTLNLDGGDIELSDFVFKTASAAKKLENKGPSKTKNLNKESSRDIHILHLTTSAIRTLLLDEEAKIRSLEKKLMKQSTILQKSVSSMKKFMFEEPSRETKMKRKKREKRKIVVKSPHILPITTTQKHTIKEKSEISNLEKPIVRGTDILKKSTSARKKRVLKGKSKSATLPKKCDNFPFDLVRSSSDSSKQEVEEQPKPGNVDKKVSDDSYSPDISTTPTKKHTLKGQSKSRTIYEKGVDLPNNLVLSKSASSIQEFEEQPQPGNVDKKVSDDSYSPDISTSPTKKHTLKGQPKSENSDEKGIKRPNNLHMSASVARKRLLKALSTIP.

The interval 21 to 51 (PYKKGLLNSSPKPKEKHNAKSKYGKNESMVL) is disordered. The LRR 1 repeat unit spans residues 161–184 (VNQMEEISKDQSNLEELQSDGKTA). The stretch at 279–330 (LEKALNDQQTIESKYKQLETDFQMLIMEKTLLEAEIRRLREIERVKSAAKEE) forms a coiled coil. An LRR 2 repeat occupies 1310-1333 (IKELSKTLNLDGGDIELSDFVFKT).

In terms of tissue distribution, exclusively expressed in the testes.

This chain is Coiled-coil domain-containing protein 7A, found in Mus musculus (Mouse).